The sequence spans 180 residues: NADH-quinone oxidoreductase subunit I (180 aa).

4Fe-4S ferredoxin-type domains are found at residues 50-80 (LTRD…LQKA) and 90-119 (EFFR…MTPD). Residues cysteine 60, cysteine 63, cysteine 66, cysteine 70, cysteine 99, cysteine 102, cysteine 105, and cysteine 109 each coordinate [4Fe-4S] cluster.

Belongs to the complex I 23 kDa subunit family. NDH-1 is composed of 14 different subunits. Subunits NuoA, H, J, K, L, M, N constitute the membrane sector of the complex. It depends on [4Fe-4S] cluster as a cofactor.

Its subcellular location is the cell inner membrane. The catalysed reaction is a quinone + NADH + 5 H(+)(in) = a quinol + NAD(+) + 4 H(+)(out). NDH-1 shuttles electrons from NADH, via FMN and iron-sulfur (Fe-S) centers, to quinones in the respiratory chain. The immediate electron acceptor for the enzyme in this species is believed to be ubiquinone. Couples the redox reaction to proton translocation (for every two electrons transferred, four hydrogen ions are translocated across the cytoplasmic membrane), and thus conserves the redox energy in a proton gradient. The sequence is that of NADH-quinone oxidoreductase subunit I from Acinetobacter baylyi (strain ATCC 33305 / BD413 / ADP1).